Consider the following 235-residue polypeptide: MAAVRGVRVVGTSPGLLLGRGMRAFLLLLCLAARGGALYFHIGETEKKCFIEEIPDETMVIGNYRTQLYDKQREEYQPATPGLGMFVEVKDPEDKVILARQYGSEGRFTFTSHTPGEHQICLHSNSTKFSLFAGGMLRVHLDIQVGEHANDYAEIAAKDKLSELQLRVRQLVEQVEQIQKEQNYQRWREERFRQTSESTNQRVLWWSILQTLILVAIGVWQMRHLKSFFEAKKLV.

Residues M1 to A37 form the signal peptide. The Lumenal segment spans residues L38 to R202. Positions K47–V145 constitute a GOLD domain. Residues C121–K160 form a required for interaction with STX17 region. N125 carries an N-linked (GlcNAc...) asparagine glycan. A coiled-coil region spans residues E154–Y184. K160 carries the post-translational modification N6-acetyllysine. The helical transmembrane segment at V203–M222 threads the bilayer. Residues R223 to V235 are Cytoplasmic-facing. The COPII vesicle coat-binding signature appears at F228–F229. Positions F228–V235 match the COPI vesicle coat-binding motif.

It belongs to the EMP24/GP25L family. In terms of assembly, monomer and homodimer in endoplasmic reticulum. Predominantly monomeric and to lesser extent homodimeric in endoplasmic reticulum-Golgi intermediate compartment and cis-Golgi network. Probably oligomerizes with other members of the EMP24/GP25L family such as TMED2, TMED7 and TMED10. Interacts with TMED5. Interacts (via C-terminus) with COPG1; the interaction involves dimeric TMED9. Interacts with PTPN2 and SPAST. Interacts with STX17; the interaction is direct. In terms of processing, N-linked glycosylated containing high mannose.

It localises to the endoplasmic reticulum membrane. The protein localises to the golgi apparatus. It is found in the cis-Golgi network membrane. Its subcellular location is the endoplasmic reticulum-Golgi intermediate compartment membrane. The protein resides in the trans-Golgi network membrane. In terms of biological role, appears to be involved in vesicular protein trafficking, mainly in the early secretory pathway. In COPI vesicle-mediated retrograde transport involved in the coatomer recruitment to membranes of the early secretory pathway. Increases coatomer-dependent activity of ARFGAP2. Thought to play a crucial role in the specific retention of p24 complexes in cis-Golgi membranes; specifically contributes to the coupled localization of TMED2 and TMED10 in the cis-Golgi network. May be involved in organization of intracellular membranes, such as of the ER-Golgi intermediate compartment and the Golgi apparatus. Involved in ER localization of PTPN2. In Rattus norvegicus (Rat), this protein is Transmembrane emp24 domain-containing protein 9 (Tmed9).